Here is a 178-residue protein sequence, read N- to C-terminus: Large ribosomal subunit protein uL16 (178 aa).

It belongs to the universal ribosomal protein uL16 family.

The chain is Large ribosomal subunit protein uL16 from Saccharolobus islandicus (strain Y.N.15.51 / Yellowstone #2) (Sulfolobus islandicus).